The following is a 182-amino-acid chain: Large ribosomal subunit protein uL5 (182 aa).

Belongs to the universal ribosomal protein uL5 family. Part of the 50S ribosomal subunit; part of the 5S rRNA/L5/L18/L25 subcomplex. Contacts the 5S rRNA and the P site tRNA. Forms a bridge to the 30S subunit in the 70S ribosome.

This is one of the proteins that bind and probably mediate the attachment of the 5S RNA into the large ribosomal subunit, where it forms part of the central protuberance. In the 70S ribosome it contacts protein S13 of the 30S subunit (bridge B1b), connecting the 2 subunits; this bridge is implicated in subunit movement. Contacts the P site tRNA; the 5S rRNA and some of its associated proteins might help stabilize positioning of ribosome-bound tRNAs. The polypeptide is Large ribosomal subunit protein uL5 (Borrelia garinii subsp. bavariensis (strain ATCC BAA-2496 / DSM 23469 / PBi) (Borreliella bavariensis)).